A 282-amino-acid chain; its full sequence is 4-hydroxybenzoate octaprenyltransferase (282 aa).

9 helical membrane passes run 17-37, 40-60, 90-110, 113-133, 135-155, 163-183, 207-227, 231-251, and 262-282; these read IGIL…NQGF, IDLL…GCVI, AFIL…KLPI, FYFA…KRFL, APQL…FIAS, FVVL…MYAM, LIIA…AINK, WFFY…LKLI, and AFLV…LALI.

It belongs to the UbiA prenyltransferase family. It depends on Mg(2+) as a cofactor.

It localises to the cell inner membrane. It catalyses the reaction all-trans-octaprenyl diphosphate + 4-hydroxybenzoate = 4-hydroxy-3-(all-trans-octaprenyl)benzoate + diphosphate. It functions in the pathway cofactor biosynthesis; ubiquinone biosynthesis. Its function is as follows. Catalyzes the prenylation of para-hydroxybenzoate (PHB) with an all-trans polyprenyl group. Mediates the second step in the final reaction sequence of ubiquinone-8 (UQ-8) biosynthesis, which is the condensation of the polyisoprenoid side chain with PHB, generating the first membrane-bound Q intermediate 3-octaprenyl-4-hydroxybenzoate. The polypeptide is 4-hydroxybenzoate octaprenyltransferase (Legionella pneumophila (strain Paris)).